The following is a 411-amino-acid chain: Phosphopentomutase (411 aa).

Aspartate 14, aspartate 306, histidine 311, aspartate 347, histidine 348, and histidine 359 together coordinate Mn(2+).

It belongs to the phosphopentomutase family. Mn(2+) serves as cofactor.

It localises to the cytoplasm. The catalysed reaction is 2-deoxy-alpha-D-ribose 1-phosphate = 2-deoxy-D-ribose 5-phosphate. It catalyses the reaction alpha-D-ribose 1-phosphate = D-ribose 5-phosphate. Its pathway is carbohydrate degradation; 2-deoxy-D-ribose 1-phosphate degradation; D-glyceraldehyde 3-phosphate and acetaldehyde from 2-deoxy-alpha-D-ribose 1-phosphate: step 1/2. Functionally, isomerase that catalyzes the conversion of deoxy-ribose 1-phosphate (dRib-1-P) and ribose 1-phosphate (Rib-1-P) to deoxy-ribose 5-phosphate (dRib-5-P) and ribose 5-phosphate (Rib-5-P), respectively. The protein is Phosphopentomutase of Lactococcus lactis subsp. cremoris (strain SK11).